Here is a 233-residue protein sequence, read N- to C-terminus: MKSAILVFPGINRERDMARALKLISGHEPAMVWHAETSLPKGTDLVVMPGGFSYGDYLRCGAIAARSPVMDAVRAFAADGGLVLGVCNGFQILCESGLLPGILMRNARLKFICHDVHLRVERSDTPFTRGYNAGQVIRVPVAHGEGNYAADEETIRRLEGEGRVLYRYCSATGEIGDTHNINGAAQSIAGIVNVRGNVLGMMPHPENHVEDIMGCTDGRGLFAGLVAHLERAA.

One can recognise a Glutamine amidotransferase type-1 domain in the interval 3-233; that stretch reads SAILVFPGIN…GLVAHLERAA (231 aa). Cysteine 87 serves as the catalytic Nucleophile. Active-site residues include histidine 204 and glutamate 206.

Part of the FGAM synthase complex composed of 1 PurL, 1 PurQ and 2 PurS subunits.

Its subcellular location is the cytoplasm. It catalyses the reaction N(2)-formyl-N(1)-(5-phospho-beta-D-ribosyl)glycinamide + L-glutamine + ATP + H2O = 2-formamido-N(1)-(5-O-phospho-beta-D-ribosyl)acetamidine + L-glutamate + ADP + phosphate + H(+). The enzyme catalyses L-glutamine + H2O = L-glutamate + NH4(+). Its pathway is purine metabolism; IMP biosynthesis via de novo pathway; 5-amino-1-(5-phospho-D-ribosyl)imidazole from N(2)-formyl-N(1)-(5-phospho-D-ribosyl)glycinamide: step 1/2. Its function is as follows. Part of the phosphoribosylformylglycinamidine synthase complex involved in the purines biosynthetic pathway. Catalyzes the ATP-dependent conversion of formylglycinamide ribonucleotide (FGAR) and glutamine to yield formylglycinamidine ribonucleotide (FGAM) and glutamate. The FGAM synthase complex is composed of three subunits. PurQ produces an ammonia molecule by converting glutamine to glutamate. PurL transfers the ammonia molecule to FGAR to form FGAM in an ATP-dependent manner. PurS interacts with PurQ and PurL and is thought to assist in the transfer of the ammonia molecule from PurQ to PurL. The sequence is that of Phosphoribosylformylglycinamidine synthase subunit PurQ from Nitrobacter hamburgensis (strain DSM 10229 / NCIMB 13809 / X14).